We begin with the raw amino-acid sequence, 399 residues long: Chromosomal replication initiator protein DnaA (399 aa).

Residues 1-64 (MELNALIKKI…EEEVRKLIEV (64 aa)) form a domain I, interacts with DnaA modulators region. Residues 64-77 (VKEKEEKKKVEIKD) form a domain II region. The interval 78-290 (FLNPKYTLEN…GKIKLIKLKG (213 aa)) is domain III, AAA+ region. Positions 89, 94, 122, 123, 124, 125, 126, and 127 each coordinate ADP. Ile89 is an ATP binding site. Gly122 is a binding site for ATP. Gly124, Lys125, Thr126, and His127 together coordinate ATP. Thr126 lines the Mg(2+) pocket. Residue Val156 participates in ssDNA binding. ATP is bound at residue Asp180. Asp181 lines the Mg(2+) pocket. SsDNA is bound by residues Lys188, Arg190, and Thr191. Arg277 is a binding site for ATP. Positions 291–399 (FEGLERKERK…LEKQAFDKIC (109 aa)) are domain IV, binds dsDNA.

It belongs to the DnaA family. As to quaternary structure, in the presence of ATP analog AMP-PCP forms a linear, right-handed spiral filament with 4 subunits arranged head-to-tail, about 122 Angstroms wide and about 360 Angstroms long. Mg(2+)-AMP-PCP binds at the subunit interface with the gamma phosphate coordinated by adjacent subunits. dsDNA probably wraps on the outside of the filament. ssDNA binds to the center of the helical filament via the AAA+ domain, which stretches the DNA.

The protein localises to the cytoplasm. In terms of biological role, plays an essential role in the initiation and regulation of chromosomal replication. ATP-DnaA binds to the origin of replication (oriC) to initiate formation of the DNA replication initiation complex once per cell cycle. Binds the DnaA box (a 9 base pair repeat at the origin) and separates the double-stranded (ds)DNA. Forms a right-handed helical filament on oriC DNA; dsDNA binds to the exterior of the filament while single-stranded (ss)DNA is stabiized in the filament's interior. The ATP-DnaA-oriC complex binds and stabilizes one strand of the AT-rich DNA unwinding element (DUE), permitting loading of DNA polymerase. After initiation quickly degrades to an ADP-DnaA complex that is not apt for DNA replication. Binds acidic phospholipids. Its function is as follows. Able to melt short unstable dsDNA (15-mer with melting temperature, TM, 43 degrees Celsius) in the presence of a non-hydrolyzable ATP analog; a more stable dsDNA (20-mer, TM 55 degrees Celsius) is poor substrate. ADP does not support dsDNA melting. Addition of DnaA-AMP-PCP (an ATP analog, beta,gamma-methyleneadenosine 5'-triphosphate) to an oric-containing plasmid causes a DNA shift to more positively supercoiled topological species, stabilizing a positive wrap and right-handed filament as seen in the crystal structure without DNA. Filament formation generated by positive supercoiling may destabilize the origin unwinding element through compensatory negative supercoiling strain. This Aquifex aeolicus (strain VF5) protein is Chromosomal replication initiator protein DnaA.